The primary structure comprises 1517 residues: Neurite extension and migration factor (1517 aa).

Positions 381–405 (DKKKGKEEVHEDKSIEKKDEKDNGE) are enriched in basic and acidic residues. Disordered regions lie at residues 381-416 (DKKKGKEEVHEDKSIEKKDEKDNGEKPALNNKPCSG), 505-529 (VNERKEWPPGGSKEEDDDEWCPKKR), 644-697 (SMEA…GLIG), 732-775 (KKIK…HMSE), 1065-1084 (RHSSLSEMSPPDTPSLSPQS), 1161-1228 (DEPA…KKGK), and 1372-1422 (AGTP…SSED). Residues 644 to 663 (SMEASASSKQVSFGSDQKQA) show a composition bias toward polar residues. A compositionally biased stretch (low complexity) spans 678-687 (SALLAAPSSA). Residues 764–773 (TPGTSNSSHM) show a composition bias toward polar residues.

It localises to the nucleus. The protein localises to the cytoplasm. Involved in neurite outgrowth by regulating cell-cell adhesion via the N-cadherin signaling pathway. May act by regulating expression of protein-coding genes, such as N-cadherins and integrin beta-1 (ITGB1). In Rattus norvegicus (Rat), this protein is Neurite extension and migration factor.